A 259-amino-acid chain; its full sequence is Adenosylcobinamide-GDP ribazoletransferase (259 aa).

The next 7 helical transmembrane spans lie at 41–61, 67–87, 119–139, 148–168, 179–199, 200–220, and 237–257; these read AAIWAAPVAGLLVGLIGAIVF, FGLAMGPAAALALVATVIATG, IGAYGAMALALSLLIRWNVLS, LFALVAAHAASRGVLGAFMHL, AGAGAVSLETAIAGAVLGAIP, LLLLGAGGAIAALILLGLLFA, and TIGALQQVSEIAVLLVASVAL.

It belongs to the CobS family. The cofactor is Mg(2+).

Its subcellular location is the cell inner membrane. It carries out the reaction alpha-ribazole + adenosylcob(III)inamide-GDP = adenosylcob(III)alamin + GMP + H(+). The enzyme catalyses alpha-ribazole 5'-phosphate + adenosylcob(III)inamide-GDP = adenosylcob(III)alamin 5'-phosphate + GMP + H(+). Its pathway is cofactor biosynthesis; adenosylcobalamin biosynthesis; adenosylcobalamin from cob(II)yrinate a,c-diamide: step 7/7. Joins adenosylcobinamide-GDP and alpha-ribazole to generate adenosylcobalamin (Ado-cobalamin). Also synthesizes adenosylcobalamin 5'-phosphate from adenosylcobinamide-GDP and alpha-ribazole 5'-phosphate. In Mesorhizobium japonicum (strain LMG 29417 / CECT 9101 / MAFF 303099) (Mesorhizobium loti (strain MAFF 303099)), this protein is Adenosylcobinamide-GDP ribazoletransferase.